The following is a 66-amino-acid chain: Large ribosomal subunit protein bL35 (66 aa).

The protein belongs to the bacterial ribosomal protein bL35 family.

The chain is Large ribosomal subunit protein bL35 from Beijerinckia indica subsp. indica (strain ATCC 9039 / DSM 1715 / NCIMB 8712).